Reading from the N-terminus, the 106-residue chain is Large ribosomal subunit protein uL24 (106 aa).

It belongs to the universal ribosomal protein uL24 family. In terms of assembly, part of the 50S ribosomal subunit.

In terms of biological role, one of two assembly initiator proteins, it binds directly to the 5'-end of the 23S rRNA, where it nucleates assembly of the 50S subunit. Functionally, one of the proteins that surrounds the polypeptide exit tunnel on the outside of the subunit. In Azobacteroides pseudotrichonymphae genomovar. CFP2, this protein is Large ribosomal subunit protein uL24.